The chain runs to 276 residues: Pantothenate synthetase (276 aa).

26 to 33 (MGYLHEGH) contacts ATP. The Proton donor role is filled by histidine 33. Position 57 (glutamine 57) interacts with (R)-pantoate. Residue glutamine 57 coordinates beta-alanine. An ATP-binding site is contributed by 142–145 (GLKD). Glutamine 148 contacts (R)-pantoate. ATP-binding positions include isoleucine 171 and 179-182 (KSSR).

Belongs to the pantothenate synthetase family. In terms of assembly, homodimer.

It is found in the cytoplasm. The catalysed reaction is (R)-pantoate + beta-alanine + ATP = (R)-pantothenate + AMP + diphosphate + H(+). Its pathway is cofactor biosynthesis; (R)-pantothenate biosynthesis; (R)-pantothenate from (R)-pantoate and beta-alanine: step 1/1. Its function is as follows. Catalyzes the condensation of pantoate with beta-alanine in an ATP-dependent reaction via a pantoyl-adenylate intermediate. The sequence is that of Pantothenate synthetase from Exiguobacterium sp. (strain ATCC BAA-1283 / AT1b).